The following is a 254-amino-acid chain: Protein EFFECTOR OF TRANSCRIPTION 3 (254 aa).

The GIY-YIG domain occupies 103-152 (RCTGLYELGVGVIGQDQGQNFDPDNNVLGVYVGQCVDVKSRLQDYGRRGG).

The protein resides in the cytoplasm. This Arabidopsis thaliana (Mouse-ear cress) protein is Protein EFFECTOR OF TRANSCRIPTION 3.